Reading from the N-terminus, the 323-residue chain is Quinolinate synthase (323 aa).

Residues H39 and S56 each contribute to the iminosuccinate site. A [4Fe-4S] cluster-binding site is contributed by C101. Iminosuccinate is bound by residues 127-129 and S144; that span reads YIN. C187 lines the [4Fe-4S] cluster pocket. Iminosuccinate-binding positions include 213–215 and T230; that span reads HPE. Position 280 (C280) interacts with [4Fe-4S] cluster.

The protein belongs to the quinolinate synthase family. Type 2 subfamily. The cofactor is [4Fe-4S] cluster.

Its subcellular location is the cytoplasm. The catalysed reaction is iminosuccinate + dihydroxyacetone phosphate = quinolinate + phosphate + 2 H2O + H(+). It participates in cofactor biosynthesis; NAD(+) biosynthesis; quinolinate from iminoaspartate: step 1/1. Functionally, catalyzes the condensation of iminoaspartate with dihydroxyacetone phosphate to form quinolinate. The chain is Quinolinate synthase from Chlorobium phaeobacteroides (strain DSM 266 / SMG 266 / 2430).